The following is a 312-amino-acid chain: Ornithine carbamoyltransferase (312 aa).

Carbamoyl phosphate is bound by residues 50–53 (STRT), Gln77, Arg101, and 128–131 (HPCQ). Residues Asn159, Asp223, and 227–228 (SM) each bind L-ornithine. Carbamoyl phosphate is bound by residues 263-264 (CL) and Arg291.

This sequence belongs to the aspartate/ornithine carbamoyltransferase superfamily. OTCase family.

It localises to the cytoplasm. The catalysed reaction is carbamoyl phosphate + L-ornithine = L-citrulline + phosphate + H(+). Its pathway is amino-acid biosynthesis; L-arginine biosynthesis; L-arginine from L-ornithine and carbamoyl phosphate: step 1/3. In terms of biological role, reversibly catalyzes the transfer of the carbamoyl group from carbamoyl phosphate (CP) to the N(epsilon) atom of ornithine (ORN) to produce L-citrulline. The sequence is that of Ornithine carbamoyltransferase from Acidothermus cellulolyticus (strain ATCC 43068 / DSM 8971 / 11B).